Consider the following 124-residue polypeptide: Small ribosomal subunit protein uS13 (124 aa).

Positions 98 to 124 (VRGQRTRCNARTRKGPRKTVGAKRKEK) are disordered.

The protein belongs to the universal ribosomal protein uS13 family. Part of the 30S ribosomal subunit. Forms a loose heterodimer with protein S19. Forms two bridges to the 50S subunit in the 70S ribosome.

Functionally, located at the top of the head of the 30S subunit, it contacts several helices of the 16S rRNA. In the 70S ribosome it contacts the 23S rRNA (bridge B1a) and protein L5 of the 50S subunit (bridge B1b), connecting the 2 subunits; these bridges are implicated in subunit movement. Contacts the tRNAs in the A and P-sites. This Dictyoglomus thermophilum (strain ATCC 35947 / DSM 3960 / H-6-12) protein is Small ribosomal subunit protein uS13.